The chain runs to 465 residues: MRGEWQEFKTPAGKKYYYNKNTKQSRWEKPNLKKGSNLESNAKESQTERKPTFSLELVNGWHLIIYNDGTKLYFNDDSKEFKNDISQEDDSRCRSLIESLDKEKLVLLIGVARGYTMREEDIDKILESCNEEIHLFKRNQDEVERKDEISEEAGDVKSPLQESHTGLVSGYGSSSGEEDEEEDEEEDEENEEQIVNQDISIIDDLNRIDTDDIDERNIFFELFDRYKLDKFSTWSLQSKKIENDPDFYKIRDDTVRESLFEEWCGERSGNATAEESDSEDNSEDDSEVLEPTKYHYLAQIVANAGTIAPDTIPQDIRKQQKALYKAYKIKEYIPSKRDQDKFVSQLLFYYKTFDLEQRKEIFCDCLRDHERDFTGAVESLRQDKELIDRWQTLLKAPADSSSIEDILLSIEHRCCVSPIVVTEPRYYVVGILEKTVVWVRWLAAEVGPSSRFTPVGAGNEPINPE.

One can recognise a WW domain in the interval methionine 1 to leucine 32. Disordered stretches follow at residues glutamate 28–arginine 49, glutamate 144–aspartate 198, and glutamate 266–valine 288. Residue serine 150 is modified to Phosphoserine. The segment covering leucine 160–serine 175 has biased composition (polar residues). Residues glycine 176–glutamate 192 are compositionally biased toward acidic residues. In terms of domain architecture, FF spans aspartate 212–glutamate 266. Positions glutamate 274–valine 288 are enriched in acidic residues.

Component of the precatalytic spliceosomal complex B. Interacts with PRP19.

Its subcellular location is the nucleus. Its function is as follows. Component of the spliceosome involved in mRNA processing. The polypeptide is Pre-mRNA-splicing factor URN1 (URN1) (Saccharomyces cerevisiae (strain ATCC 204508 / S288c) (Baker's yeast)).